The primary structure comprises 154 residues: Large ribosomal subunit protein uL13 (154 aa).

The protein belongs to the universal ribosomal protein uL13 family. Part of the 50S ribosomal subunit.

Its function is as follows. This protein is one of the early assembly proteins of the 50S ribosomal subunit, although it is not seen to bind rRNA by itself. It is important during the early stages of 50S assembly. This Bradyrhizobium sp. (strain BTAi1 / ATCC BAA-1182) protein is Large ribosomal subunit protein uL13.